A 404-amino-acid chain; its full sequence is uncharacterized protein (404 aa).

Polar residues predominate over residues 1 to 22 (MASSINNSSQPTVPSISNNSHG). Positions 1-110 (MASSINNSSQ…QQTPVKRRRR (110 aa)) are disordered. Threonine 47 carries the post-translational modification Phosphothreonine. The span at 87–104 (SRGSSLKSHLETESQQTP) shows a compositional bias: polar residues. The PHD-type zinc-finger motif lies at 117–166 (VDYCSACGGRGLFICCEGCPCSFHLSCLEPPLTPENIPEGSWFCVTCSIK).

This is an uncharacterized protein from Schizosaccharomyces pombe (strain 972 / ATCC 24843) (Fission yeast).